Here is a 921-residue protein sequence, read N- to C-terminus: Isoleucine--tRNA ligase 1 (921 aa).

The 'HIGH' region signature appears at 57–67; sequence PYANGDIHMGH. Glu552 contributes to the L-isoleucyl-5'-AMP binding site. A 'KMSKS' region motif is present at residues 593 to 597; it reads KMSKS. Lys596 contacts ATP. 4 residues coordinate Zn(2+): Cys888, Cys891, Cys908, and Cys911.

Belongs to the class-I aminoacyl-tRNA synthetase family. IleS type 1 subfamily. Monomer. Requires Zn(2+) as cofactor.

Its subcellular location is the cytoplasm. It catalyses the reaction tRNA(Ile) + L-isoleucine + ATP = L-isoleucyl-tRNA(Ile) + AMP + diphosphate. Its function is as follows. Catalyzes the attachment of isoleucine to tRNA(Ile). As IleRS can inadvertently accommodate and process structurally similar amino acids such as valine, to avoid such errors it has two additional distinct tRNA(Ile)-dependent editing activities. One activity is designated as 'pretransfer' editing and involves the hydrolysis of activated Val-AMP. The other activity is designated 'posttransfer' editing and involves deacylation of mischarged Val-tRNA(Ile). The polypeptide is Isoleucine--tRNA ligase 1 (Bacillus cereus (strain ZK / E33L)).